We begin with the raw amino-acid sequence, 419 residues long: L-rhamnose isomerase (419 aa).

3 residues coordinate Mn(2+): His-262, Asp-294, and Asp-296.

Belongs to the rhamnose isomerase family. In terms of assembly, homotetramer. Requires Mn(2+) as cofactor.

It is found in the cytoplasm. It catalyses the reaction L-rhamnopyranose = L-rhamnulose. It participates in carbohydrate degradation; L-rhamnose degradation; glycerone phosphate from L-rhamnose: step 1/3. Functionally, catalyzes the interconversion of L-rhamnose and L-rhamnulose. This is L-rhamnose isomerase from Salmonella agona (strain SL483).